A 247-amino-acid polypeptide reads, in one-letter code: tRNA pseudouridine synthase A 1 (247 aa).

Asp53 serves as the catalytic Nucleophile. Tyr111 contacts substrate.

It belongs to the tRNA pseudouridine synthase TruA family. Homodimer.

It carries out the reaction uridine(38/39/40) in tRNA = pseudouridine(38/39/40) in tRNA. Formation of pseudouridine at positions 38, 39 and 40 in the anticodon stem and loop of transfer RNAs. The sequence is that of tRNA pseudouridine synthase A 1 from Bacillus cereus (strain ZK / E33L).